Here is a 147-residue protein sequence, read N- to C-terminus: Large ribosomal subunit protein uL15 (147 aa).

Residues 1-13 (MRLHDLKPAEGAR) show a composition bias toward basic and acidic residues. The interval 1–58 (MRLHDLKPAEGARRERKRVGRGIGSGHGKTSGRGQKGQKARSGGGVRPGFEGGQMPLT) is disordered. Composition is skewed to gly residues over residues 21–35 (RGIGSGHGKTSGRGQ) and 42–52 (SGGGVRPGFEG).

It belongs to the universal ribosomal protein uL15 family. Part of the 50S ribosomal subunit.

Binds to the 23S rRNA. The protein is Large ribosomal subunit protein uL15 of Thermoanaerobacter sp. (strain X514).